The chain runs to 1072 residues: MLGDGKEGTSTIPGFNQIQFEGFYRFIDQGLIEELSKFPKIEDIDHEIEFQLFMETYQLVEPLIKERDAVYESLTYSSELYVSAGLIWKTSRNMQEQRIFIGNIPLMNSLGTSIVNGIYRIVINQILQSPGIYYQSELDHNGISVYTGTIISDWGGRLELEIDKKARIWARVSRKQKISILVLSSAMGSNLREILENVCYPEIFLSFLTDKEKKKIGSKENAILEFYQQFSCVGGDPIFSESLCKELQKKFFHQRCELGRIGRRNINWRLNLNIPQNNIFLLPRDILAAADHLIGMKFGMGTLDDMNHLKNKRIRSVADLLQDQLGLALSRLENVVKGTISGAIRHKLIPTPQNLVTSTPLTTTYESFFGLHPLSQVLDRTNPLTQIVHGRKLSYLGPGGLTGRTANFRIRDIHPSHYGRICPIDTSEGINVGLIGSLSIHARIGDWGSLESPFYELFEKSKKARIRMLFLSPSQDEYFMIAAGNSLALNRGIQEEQAVPARYRQEFLTIAWEEVHLRSIFPFQYFSIGASLIPFIEHNDANRALMSSNMQRQAVPLSRSEKCIVGTGLERQVALDSGVPAIAEHEGKILYTDTEKIVFSGNGDTLSIPLIMYERSNKNTCMHQKPQVRRGKCIKKGQILADGAATVGGELALGKNILVAYMPWEGYNFEDAVLISECLVYGDIYTSFHIRKYEIQTHVTTQGPERITKEIPHLEGRLLRHLDKNGIVMLGSWVETGDILVGKLTPQVAKESSYAPEDRLLRAILGIQVSTSKETCLKLPIGGRGRVIDVRWVQKKGGSSYNPEIIRVYISQKREIKVGDKVAGRHGNKGIISKILPRQDMPYLQDGRPVDMVFNPLGVPSRMNVGQIFECSLGLAGSLLDRHYRIAPFDERYEQEASRKLVFSELYKASKQTANPWVFEPEYPGKSRIFDGRTGDPFEQPVIIGKPYILKLIHQVDDKIHGRSSGHYALVTQQPLRGRSKQGGQRVGEMEVWALEGFGVAHILQEMLTYKSDHIRARQEVLGTTIIGGTIPKPEDAPESFRLLVRELRSLALELNHFLVSEKNFQINRKEV.

This sequence belongs to the RNA polymerase beta chain family. In plastids the minimal PEP RNA polymerase catalytic core is composed of four subunits: alpha, beta, beta', and beta''. When a (nuclear-encoded) sigma factor is associated with the core the holoenzyme is formed, which can initiate transcription.

It localises to the plastid. The protein resides in the chloroplast. The catalysed reaction is RNA(n) + a ribonucleoside 5'-triphosphate = RNA(n+1) + diphosphate. DNA-dependent RNA polymerase catalyzes the transcription of DNA into RNA using the four ribonucleoside triphosphates as substrates. This is DNA-directed RNA polymerase subunit beta from Nasturtium officinale (Watercress).